Reading from the N-terminus, the 572-residue chain is Urease subunit alpha (572 aa).

Residues 136–572 (GGIDTHIHFI…VPLGQRYFLF (437 aa)) enclose the Urease domain. The Ni(2+) site is built by H141, H143, and K224. N6-carboxylysine is present on K224. A substrate-binding site is contributed by H226. Positions 253 and 279 each coordinate Ni(2+). The active-site Proton donor is the H327. D367 serves as a coordination point for Ni(2+).

It belongs to the metallo-dependent hydrolases superfamily. Urease alpha subunit family. As to quaternary structure, heterotrimer of UreA (gamma), UreB (beta) and UreC (alpha) subunits. Three heterotrimers associate to form the active enzyme. The cofactor is Ni cation. Post-translationally, carboxylation allows a single lysine to coordinate two nickel ions.

The protein localises to the cytoplasm. The enzyme catalyses urea + 2 H2O + H(+) = hydrogencarbonate + 2 NH4(+). Its pathway is nitrogen metabolism; urea degradation; CO(2) and NH(3) from urea (urease route): step 1/1. The sequence is that of Urease subunit alpha from Haemophilus influenzae (strain 86-028NP).